The primary structure comprises 706 residues: Polyribonucleotide nucleotidyltransferase (706 aa).

2 residues coordinate Mg(2+): Asp490 and Asp496. The KH domain maps to 556–615 (PRIETMQIPTDKIREVIGSGGKVIREIVEVSGAKVDINDEGIIKIASPNGDSIQKAYDMI). Residues 625–693 (GKIYKGKVVK…DRGKVRLAMK (69 aa)) form the S1 motif domain.

It belongs to the polyribonucleotide nucleotidyltransferase family. It depends on Mg(2+) as a cofactor.

The protein localises to the cytoplasm. The catalysed reaction is RNA(n+1) + phosphate = RNA(n) + a ribonucleoside 5'-diphosphate. Involved in mRNA degradation. Catalyzes the phosphorolysis of single-stranded polyribonucleotides processively in the 3'- to 5'-direction. The sequence is that of Polyribonucleotide nucleotidyltransferase from Jannaschia sp. (strain CCS1).